Here is a 214-residue protein sequence, read N- to C-terminus: Pyridoxine/pyridoxamine 5'-phosphate oxidase (214 aa).

Substrate is bound by residues Arg-8–Tyr-11 and Lys-66. Residues Arg-61–Lys-66, Phe-76–Thr-77, Arg-82, Lys-83, and Gln-105 contribute to the FMN site. Tyr-123, Arg-127, and Ser-131 together coordinate substrate. FMN is bound by residues Gln-140 to Ser-141 and Trp-184. Arg-190–His-192 provides a ligand contact to substrate. Arg-194 lines the FMN pocket.

Belongs to the pyridoxamine 5'-phosphate oxidase family. In terms of assembly, homodimer. Requires FMN as cofactor.

The enzyme catalyses pyridoxamine 5'-phosphate + O2 + H2O = pyridoxal 5'-phosphate + H2O2 + NH4(+). The catalysed reaction is pyridoxine 5'-phosphate + O2 = pyridoxal 5'-phosphate + H2O2. It functions in the pathway cofactor metabolism; pyridoxal 5'-phosphate salvage; pyridoxal 5'-phosphate from pyridoxamine 5'-phosphate: step 1/1. It participates in cofactor metabolism; pyridoxal 5'-phosphate salvage; pyridoxal 5'-phosphate from pyridoxine 5'-phosphate: step 1/1. In terms of biological role, catalyzes the oxidation of either pyridoxine 5'-phosphate (PNP) or pyridoxamine 5'-phosphate (PMP) into pyridoxal 5'-phosphate (PLP). This chain is Pyridoxine/pyridoxamine 5'-phosphate oxidase, found in Burkholderia cenocepacia (strain HI2424).